Reading from the N-terminus, the 146-residue chain is Basic phospholipase A2 beta-bungarotoxin A1 chain (146 aa).

The signal sequence occupies residues 1–19 (MNPAHLLVLPAVCVSFLGA). A propeptide spanning residues 20–27 (SIIPPQSL) is cleaved from the precursor. Disulfide bonds link cysteine 54–cysteine 145, cysteine 56–cysteine 72, cysteine 71–cysteine 126, cysteine 78–cysteine 119, cysteine 87–cysteine 112, and cysteine 105–cysteine 117. Residues tyrosine 55, glycine 57, and glycine 59 each coordinate Ca(2+). The active site involves histidine 75. Aspartate 76 contacts Ca(2+). Aspartate 120 is a catalytic residue.

The protein belongs to the phospholipase A2 family. Group I subfamily. D49 sub-subfamily. Heterodimer with beta-bungarotoxin B chain; disulfide-linked. The A chain has phospholipase A2 activity and the B chain shows homology with the basic protease inhibitors. Ca(2+) serves as cofactor. In terms of tissue distribution, expressed by the venom gland.

Its subcellular location is the secreted. The catalysed reaction is a 1,2-diacyl-sn-glycero-3-phosphocholine + H2O = a 1-acyl-sn-glycero-3-phosphocholine + a fatty acid + H(+). In terms of biological role, snake venom phospholipase A2 (PLA2) that inhibits neuromuscular transmission by blocking acetylcholine release from the nerve termini. PLA2 catalyzes the calcium-dependent hydrolysis of the 2-acyl groups in 3-sn-phosphoglycerides. The chain is Basic phospholipase A2 beta-bungarotoxin A1 chain from Bungarus flaviceps flaviceps (Red-headed krait).